A 287-amino-acid chain; its full sequence is Acetylglutamate kinase (287 aa).

Substrate contacts are provided by residues 65 to 66 (GG), arginine 87, and asparagine 181.

It belongs to the acetylglutamate kinase family. ArgB subfamily.

It is found in the cytoplasm. It catalyses the reaction N-acetyl-L-glutamate + ATP = N-acetyl-L-glutamyl 5-phosphate + ADP. The protein operates within amino-acid biosynthesis; L-arginine biosynthesis; N(2)-acetyl-L-ornithine from L-glutamate: step 2/4. Its function is as follows. Catalyzes the ATP-dependent phosphorylation of N-acetyl-L-glutamate. In Syntrophomonas wolfei subsp. wolfei (strain DSM 2245B / Goettingen), this protein is Acetylglutamate kinase.